A 400-amino-acid polypeptide reads, in one-letter code: Cytohesin-2 (400 aa).

Positions aspartate 10–methionine 67 form a coiled coil. The 130-residue stretch at phenylalanine 72–asparagine 201 folds into the SEC7 domain. A PH domain is found at asparagine 259–serine 376. A 1,2-diacyl-sn-glycero-3-phospho-(1D-myo-inositol-3,4,5-trisphosphate) is bound by residues lysine 268 to threonine 276, arginine 280, tyrosine 291, arginine 301, lysine 339, asparagine 350, and histidine 351. The interval arginine 387–lysine 395 is C-terminal autoinhibitory region.

As to quaternary structure, heteromer. Composed of TAMALIN, CYTH2 and at least one GRM1. Interacts with ARRB1. Interacts with ARL4D; the interaction is direct. Directly interacts with CCDC120 through the coiled coil domain; this interaction stabilizes CCDC120, possibly by preventing its ubiquitination, and is required for neurite growth in a neuroblastoma cell line. Interacts with FRMD4A. Interacts (via N-terminal domain) with INAVA (via N-terminal domain). Present in all tissues tested, with highest protein levels in brain and adrenal.

It localises to the cell membrane. The protein localises to the cytoplasm. It is found in the cell projection. The protein resides in the growth cone. Its subcellular location is the cell junction. It localises to the tight junction. The protein localises to the adherens junction. In terms of biological role, acts as a guanine-nucleotide exchange factor (GEF). Promotes guanine-nucleotide exchange on ARF1, ARF3 and ARF6. Activates ARF factors through replacement of GDP with GTP. The cell membrane form, in association with ARL4 proteins, recruits ARF6 to the plasma membrane. Involved in neurite growth. The sequence is that of Cytohesin-2 (Cyth2) from Mus musculus (Mouse).